Consider the following 258-residue polypeptide: Protein STAY-GREEN LIKE, chloroplastic (258 aa).

This sequence belongs to the staygreen family. In terms of tissue distribution, strongly expressed in leaves, stems and panicles, and at lower levels in roots and seeds.

Functionally, promotes chlorophyll degradation in leaves. May be involved in LHCI proteins degradation, regulating the balance between LHCI and LHCII. This Oryza sativa subsp. japonica (Rice) protein is Protein STAY-GREEN LIKE, chloroplastic.